We begin with the raw amino-acid sequence, 73 residues long: ATP synthase subunit 9, mitochondrial (73 aa).

Helical transmembrane passes span 12 to 32 (VAAL…AALI) and 50 to 70 (ILGF…SFLL).

Belongs to the ATPase C chain family. F-type ATPases have 2 components, CF(1) - the catalytic core - and CF(0) - the membrane proton channel. CF(1) has five subunits: alpha(3), beta(3), gamma(1), delta(1), epsilon(1). CF(0) has three main subunits: a, b and c.

The protein resides in the mitochondrion inner membrane. Its function is as follows. Mitochondrial membrane ATP synthase (F(1)F(0) ATP synthase or Complex V) produces ATP from ADP in the presence of a proton gradient across the membrane which is generated by electron transport complexes of the respiratory chain. F-type ATPases consist of two structural domains, F(1) - containing the extramembraneous catalytic core and F(0) - containing the membrane proton channel, linked together by a central stalk and a peripheral stalk. During catalysis, ATP synthesis in the catalytic domain of F(1) is coupled via a rotary mechanism of the central stalk subunits to proton translocation. Part of the complex F(0) domain. A homomeric c-ring of probably 10 subunits is part of the complex rotary element. This Mycosarcoma maydis (Corn smut fungus) protein is ATP synthase subunit 9, mitochondrial (ATP9).